The following is a 496-amino-acid chain: Glutamyl-tRNA(Gln) amidotransferase subunit A (496 aa).

Residues lysine 75 and serine 150 each act as charge relay system in the active site. The Acyl-ester intermediate role is filled by serine 174.

The protein belongs to the amidase family. GatA subfamily. Heterotrimer of A, B and C subunits.

The catalysed reaction is L-glutamyl-tRNA(Gln) + L-glutamine + ATP + H2O = L-glutaminyl-tRNA(Gln) + L-glutamate + ADP + phosphate + H(+). In terms of biological role, allows the formation of correctly charged Gln-tRNA(Gln) through the transamidation of misacylated Glu-tRNA(Gln) in organisms which lack glutaminyl-tRNA synthetase. The reaction takes place in the presence of glutamine and ATP through an activated gamma-phospho-Glu-tRNA(Gln). This Burkholderia pseudomallei (strain 1106a) protein is Glutamyl-tRNA(Gln) amidotransferase subunit A.